We begin with the raw amino-acid sequence, 967 residues long: uncharacterized protein (967 aa).

Disordered stretches follow at residues 1-23 (MQNAPKCYLPNSRKGRDVNFHDR) and 41-72 (FTMHSESIGPKSLDSLSPRRLSNYSSAVDPRT). Residues 14–23 (KGRDVNFHDR) show a composition bias toward basic and acidic residues. The span at 60–72 (RLSNYSSAVDPRT) shows a compositional bias: polar residues. Serine 86 is subject to Phosphoserine. Disordered stretches follow at residues 135–259 (AVSE…QHLP), 271–296 (SVSRSYQSPASTPRSSVSSVSSSPPE), 380–399 (DSTTEYVNTESSSKTPAPHK), 437–464 (HSYGSPKSLHHKSSSAGERPVSPTFVAD), and 499–544 (GTRF…KSLS). The segment covering 162 to 187 (ESSTSNNLETGNSTNTALHNVSSPLE) has biased composition (polar residues). A compositionally biased stretch (basic and acidic residues) spans 205–218 (HDLDEVISEKDTSL). Over residues 221–234 (RSSRGRSSAPKRRK) the composition is skewed to basic residues. Positions 278-294 (SPASTPRSSVSSVSSSP) are enriched in low complexity. Over residues 382 to 394 (TTEYVNTESSSKT) the composition is skewed to polar residues. A compositionally biased stretch (basic residues) spans 499–508 (GTRFHSRSSH). A Phosphoserine modification is found at serine 585. Disordered stretches follow at residues 594-665 (ESNE…SVND) and 681-708 (DHRIPASDNQNNNNNDANALAENSESQH). Residues 608–622 (YDSRESTGHTIKELR) show a composition bias toward basic and acidic residues. Positions 686-704 (ASDNQNNNNNDANALAENS) are enriched in low complexity. Residue 728-736 (PCVLDVKMG) participates in substrate binding.

It belongs to the inositol phosphokinase (IPK) family.

It is found in the cytoplasm. This is an uncharacterized protein from Schizosaccharomyces pombe (strain 972 / ATCC 24843) (Fission yeast).